The following is a 159-amino-acid chain: Cyclic pyranopterin monophosphate synthase (159 aa).

Substrate-binding positions include 75-77 (LCH) and 113-114 (ME). D128 is an active-site residue.

This sequence belongs to the MoaC family. In terms of assembly, homohexamer; trimer of dimers.

It catalyses the reaction (8S)-3',8-cyclo-7,8-dihydroguanosine 5'-triphosphate = cyclic pyranopterin phosphate + diphosphate. Its pathway is cofactor biosynthesis; molybdopterin biosynthesis. Its function is as follows. Catalyzes the conversion of (8S)-3',8-cyclo-7,8-dihydroguanosine 5'-triphosphate to cyclic pyranopterin monophosphate (cPMP). The chain is Cyclic pyranopterin monophosphate synthase from Cupriavidus metallidurans (strain ATCC 43123 / DSM 2839 / NBRC 102507 / CH34) (Ralstonia metallidurans).